Consider the following 133-residue polypeptide: MAVILLGNEHIWKLPFCRLEFVAILEKMLSFAKLQTIEVYLVSDTTIAFFNLHYMNCLGITNVLSFPMDDEDLAGSIILSVDAVCRESLLYRQPILDYCLSLLSHGIAHIAGYTHGVEMDKFCSNLLLPFKLA.

Zn(2+)-binding residues include histidine 105, histidine 109, and histidine 115.

It belongs to the endoribonuclease YbeY family. Zn(2+) serves as cofactor.

The protein localises to the cytoplasm. Its function is as follows. Single strand-specific metallo-endoribonuclease involved in late-stage 70S ribosome quality control and in maturation of the 3' terminus of the 16S rRNA. The chain is Endoribonuclease YbeY from Lawsonia intracellularis (strain PHE/MN1-00).